Consider the following 102-residue polypeptide: Large ribosomal subunit protein bL21 (102 aa).

The protein belongs to the bacterial ribosomal protein bL21 family. Part of the 50S ribosomal subunit. Contacts protein L20.

Functionally, this protein binds to 23S rRNA in the presence of protein L20. The sequence is that of Large ribosomal subunit protein bL21 from Geobacter metallireducens (strain ATCC 53774 / DSM 7210 / GS-15).